We begin with the raw amino-acid sequence, 300 residues long: Actin-related protein 2/3 complex subunit 2-B (300 aa).

Belongs to the ARPC2 family. In terms of assembly, component of the Arp2/3 complex composed of actr2/arp2, actr3/arp3, arpc1 (arpc1a or arpc1b), arpc2, arpc3, arpc4 and arpc5.

It localises to the cytoplasm. Its subcellular location is the cytoskeleton. It is found in the cell projection. The protein resides in the nucleus. Functionally, actin-binding component of the Arp2/3 complex, a multiprotein complex that mediates actin polymerization upon stimulation by nucleation-promoting factor (NPF). The Arp2/3 complex mediates the formation of branched actin networks in the cytoplasm, providing the force for cell motility. In addition to its role in the cytoplasmic cytoskeleton, the Arp2/3 complex also promotes actin polymerization in the nucleus, thereby regulating gene transcription and repair of damaged DNA. The Arp2/3 complex promotes homologous recombination (HR) repair in response to DNA damage by promoting nuclear actin polymerization, leading to drive motility of double-strand breaks (DSBs). The chain is Actin-related protein 2/3 complex subunit 2-B (arpc2-b) from Xenopus laevis (African clawed frog).